We begin with the raw amino-acid sequence, 99 residues long: Integration host factor subunit alpha (99 aa).

The disordered stretch occupies residues 49–73 (FGNFDLRDKNQRPGRNPKTGEDIPI).

Belongs to the bacterial histone-like protein family. Heterodimer of an alpha and a beta chain.

Functionally, this protein is one of the two subunits of integration host factor, a specific DNA-binding protein that functions in genetic recombination as well as in transcriptional and translational control. The protein is Integration host factor subunit alpha of Shigella boydii serotype 18 (strain CDC 3083-94 / BS512).